The primary structure comprises 416 residues: Phosphatidylserine decarboxylase proenzyme, mitochondrial (416 aa).

The Mitochondrial matrix portion of the chain corresponds to Met-1–Leu-67. The chain crosses the membrane as a helical span at residues Arg-68–Ser-86. At Trp-87 to Leu-416 the chain is on the mitochondrial intermembrane side. Catalysis depends on charge relay system; for autoendoproteolytic cleavage activity residues Asp-198, His-274, and Ser-385. Ser-385 functions as the Schiff-base intermediate with substrate; via pyruvic acid; for decarboxylase activity in the catalytic mechanism. Ser-385 is modified (pyruvic acid (Ser); by autocatalysis).

The protein belongs to the phosphatidylserine decarboxylase family. PSD-B subfamily. Eukaryotic type I sub-subfamily. Heterodimer of a large membrane-associated beta subunit and a small pyruvoyl-containing alpha subunit. Pyruvate is required as a cofactor. Post-translationally, is synthesized initially as an inactive proenzyme. Formation of the active enzyme involves a self-maturation process in which the active site pyruvoyl group is generated from an internal serine residue via an autocatalytic post-translational modification. Two non-identical subunits are generated from the proenzyme in this reaction, and the pyruvate is formed at the N-terminus of the alpha chain, which is derived from the carboxyl end of the proenzyme. The autoendoproteolytic cleavage occurs by a canonical serine protease mechanism, in which the side chain hydroxyl group of the serine supplies its oxygen atom to form the C-terminus of the beta chain, while the remainder of the serine residue undergoes an oxidative deamination to produce ammonia and the pyruvoyl prosthetic group on the alpha chain. During this reaction, the Ser that is part of the protease active site of the proenzyme becomes the pyruvoyl prosthetic group, which constitutes an essential element of the active site of the mature decarboxylase.

It localises to the mitochondrion inner membrane. The protein resides in the cytoplasm. Its subcellular location is the lipid droplet. The catalysed reaction is a 1,2-diacyl-sn-glycero-3-phospho-L-serine + H(+) = a 1,2-diacyl-sn-glycero-3-phosphoethanolamine + CO2. The protein operates within phospholipid metabolism; phosphatidylethanolamine biosynthesis. In terms of biological role, catalyzes the formation of phosphatidylethanolamine (PtdEtn) from phosphatidylserine (PtdSer). Plays a central role in phospholipid metabolism and in the interorganelle trafficking of phosphatidylserine. May be involved in lipid droplet biogenesis at the endoplasmic reticulum membrane. This Bos taurus (Bovine) protein is Phosphatidylserine decarboxylase proenzyme, mitochondrial.